The following is a 413-amino-acid chain: Serine hydroxymethyltransferase (413 aa).

Residues L117 and 121-123 contribute to the (6S)-5,6,7,8-tetrahydrofolate site; that span reads GHL. Residue K226 is modified to N6-(pyridoxal phosphate)lysine. (6S)-5,6,7,8-tetrahydrofolate-binding positions include E239 and 349 to 351; that span reads SPF.

Belongs to the SHMT family. Homodimer. Pyridoxal 5'-phosphate is required as a cofactor.

The protein resides in the cytoplasm. The enzyme catalyses (6R)-5,10-methylene-5,6,7,8-tetrahydrofolate + glycine + H2O = (6S)-5,6,7,8-tetrahydrofolate + L-serine. It participates in one-carbon metabolism; tetrahydrofolate interconversion. Its pathway is amino-acid biosynthesis; glycine biosynthesis; glycine from L-serine: step 1/1. Its function is as follows. Catalyzes the reversible interconversion of serine and glycine with tetrahydrofolate (THF) serving as the one-carbon carrier. This reaction serves as the major source of one-carbon groups required for the biosynthesis of purines, thymidylate, methionine, and other important biomolecules. Also exhibits THF-independent aldolase activity toward beta-hydroxyamino acids, producing glycine and aldehydes, via a retro-aldol mechanism. In Bacillus cytotoxicus (strain DSM 22905 / CIP 110041 / 391-98 / NVH 391-98), this protein is Serine hydroxymethyltransferase.